A 405-amino-acid polypeptide reads, in one-letter code: Corticosteroid-binding globulin (405 aa).

An N-terminal signal peptide occupies residues 1–22 (MPLLLYTCLLWLPTSGLWTVQA). Asn-31, Asn-96, and Asn-176 each carry an N-linked (GlcNAc...) asparagine glycan. Residue Gln-254 coordinates cortisol. The N-linked (GlcNAc...) asparagine glycan is linked to Asn-260. Asn-286 contacts cortisol. 2 N-linked (GlcNAc...) asparagine glycosylation sites follow: Asn-330 and Asn-369. 2 residues coordinate cortisol: His-390 and Trp-393.

Belongs to the serpin family. N-glycosylated; binds 5 oligosaccharide chains. In terms of processing, glycosylation in position Asn-260 is needed for steroid binding. Plasma; synthesized in liver. Has also been identified in a number of glycocorticoid responsive cells.

The protein resides in the secreted. Its function is as follows. Major transport protein for glucocorticoids and progestins in the blood of almost all vertebrate species. This is Corticosteroid-binding globulin (SERPINA6) from Homo sapiens (Human).